The primary structure comprises 504 residues: Serine O-succinyltransferase (504 aa).

The transit peptide at 1–26 directs the protein to the mitochondrion; it reads MLRASSKRLQLSWQVFRRFQSSNPQL. Residues 49–70 form a disordered region; it reads QACPNSVDPSASITSPSLSSGP. Residues 57 to 70 are compositionally biased toward low complexity; the sequence is PSASITSPSLSSGP. An AB hydrolase-1 domain is found at 117 to 395; sequence NAILLHTGLS…SAEEIIKLNE (279 aa). The interval 124–127 is important for substrate specificity; sequence GLSA. Ser221 serves as the catalytic Nucleophile. Arg290 contacts substrate. Residues Asp443 and His480 contribute to the active site. Asp481 serves as a coordination point for substrate.

Belongs to the AB hydrolase superfamily. MetX family.

It localises to the mitochondrion. It carries out the reaction succinyl-CoA + L-serine = O-succinyl-L-serine + CoA. It functions in the pathway amino-acid biosynthesis; L-cysteine biosynthesis; L-cysteine from L-serine: step 1/2. Its function is as follows. Transfers a succinyl group from succinyl-CoA to L-serine, forming succinyl-L-serine. Also has weak serine acetyl transferase activity and homoserine succinyl transferase activity. The protein is Serine O-succinyltransferase of Schizosaccharomyces pombe (strain 972 / ATCC 24843) (Fission yeast).